A 314-amino-acid polypeptide reads, in one-letter code: Vacuolar membrane protein EC1118_1N9_3125g (314 aa).

The segment at 32-60 (KPTSSVVSETSSKSLPSLTSSAFSTSSGA) is disordered. Residues 93–113 (VYIAVGAVIGAIFISILIWWL) traverse the membrane as a helical segment. Phosphoserine occurs at positions 148, 254, and 274. The disordered stretch occupies residues 240 to 309 (EERKLNLNRP…PSMFLDDVLN (70 aa)). The segment covering 254–269 (SPERKEKKINSMEGYH) has biased composition (basic and acidic residues).

It belongs to the PRM5 family.

It localises to the vacuole membrane. In Saccharomyces cerevisiae (strain Lalvin EC1118 / Prise de mousse) (Baker's yeast), this protein is Vacuolar membrane protein EC1118_1N9_3125g.